The sequence spans 138 residues: ATP synthase epsilon chain (138 aa).

This sequence belongs to the ATPase epsilon chain family. As to quaternary structure, F-type ATPases have 2 components, CF(1) - the catalytic core - and CF(0) - the membrane proton channel. CF(1) has five subunits: alpha(3), beta(3), gamma(1), delta(1), epsilon(1). CF(0) has three main subunits: a, b and c.

The protein resides in the cell membrane. In terms of biological role, produces ATP from ADP in the presence of a proton gradient across the membrane. This Buchnera aphidicola subsp. Schizaphis graminum (strain Sg) protein is ATP synthase epsilon chain (atpC).